We begin with the raw amino-acid sequence, 155 residues long: Small ribosomal subunit protein uS7 (155 aa).

The protein belongs to the universal ribosomal protein uS7 family. In terms of assembly, part of the 30S ribosomal subunit. Contacts proteins S9 and S11.

One of the primary rRNA binding proteins, it binds directly to 16S rRNA where it nucleates assembly of the head domain of the 30S subunit. Is located at the subunit interface close to the decoding center, probably blocks exit of the E-site tRNA. The chain is Small ribosomal subunit protein uS7 from Sulfurimonas denitrificans (strain ATCC 33889 / DSM 1251) (Thiomicrospira denitrificans (strain ATCC 33889 / DSM 1251)).